Here is a 199-residue protein sequence, read N- to C-terminus: Recombination protein RecR (199 aa).

The C4-type zinc-finger motif lies at 58–73 (CQTCRILSETDLCSLC). Residues 81–176 (GQLCVVEMPS…TTTRIAHGVP (96 aa)) form the Toprim domain.

The protein belongs to the RecR family.

Functionally, may play a role in DNA repair. It seems to be involved in an RecBC-independent recombinational process of DNA repair. It may act with RecF and RecO. This is Recombination protein RecR from Nitrosococcus oceani (strain ATCC 19707 / BCRC 17464 / JCM 30415 / NCIMB 11848 / C-107).